A 724-amino-acid chain; its full sequence is MSGQEDWESEIDNPPACVPNLSNSEPAFKASNQNYFSSNNAFNRTTERGFGNRKASDDCNQNFEFSERGFGKQRAGSDANQNFESSERGFGNRRGKGRGGFGTFGKDSNGKQESGDFTNDDNRTIDDNRRRGGFQRRGGFNDETSGRGRRGVRGGTSFSGFGREDGNEQSGFTSNDGFNNETSGFGSGRRGSRGDSSFSGDRESDRGRGFGRGGFRGRNEDIGVESGKGQEGFERSEQGPRVTYIPPPPPAEESDIFKHYQTGINFDKYDDIVVEVSGSDVPPAILTFEEANLCDSLAKNVCKSGYVKLTPIQKHSIPIIVAGRDLMACAQTGSGKTAAFLLPILAHLMVKGVESSAFQTLKEPEAIIVAPTRELINQIYLDARKFSYGTCVRPVVIYGGTQMFHSLKQISEGCNILCATPGRLLDVIRKEKIGLTKLRYLVLDEADRMLDMGFREDIENLLKSSGMPSKEERQTLMFSATFPSSIQSLAREILKPDYLFVVVGQVGGACSDVEQMVIEVDEFGKKDKLMEILQEIGSERTMVFVKTKKKADFIATFLCQEKVPSTSIHGDREQKERETALRDFRTGQCPVIVATSVAARGLDIENVSYVINFDIPDDIDEYVHRIGRTGRCGNTGRAISFFDKRGDDEQRIARSLVKVLSDAHQEVPAWLEEVAFSAHGSSAYNPRSNKFASTDDRKRGDSRGDYSTSGFSPSAAQAEEEDWG.

Over residues 1 to 11 (MSGQEDWESEI) the composition is skewed to acidic residues. Disordered regions lie at residues 1-25 (MSGQEDWESEIDNPPACVPNLSNSE) and 37-241 (SSNN…QGPR). The segment covering 108–130 (SNGKQESGDFTNDDNRTIDDNRR) has biased composition (basic and acidic residues). Residues 168–182 (EQSGFTSNDGFNNET) are compositionally biased toward polar residues. Residues 286-314 (LTFEEANLCDSLAKNVCKSGYVKLTPIQK) carry the Q motif motif. The 184-residue stretch at 317–500 (IPIIVAGRDL…REILKPDYLF (184 aa)) folds into the Helicase ATP-binding domain. Position 330–337 (330–337 (AQTGSGKT)) interacts with ATP. A DEAD box motif is present at residues 444-447 (DEAD). The region spanning 512–675 (DVEQMVIEVD…EVPAWLEEVA (164 aa)) is the Helicase C-terminal domain. Positions 683–692 (AYNPRSNKFA) are enriched in polar residues. The interval 683–724 (AYNPRSNKFASTDDRKRGDSRGDYSTSGFSPSAAQAEEEDWG) is disordered. Residues 693-704 (STDDRKRGDSRG) show a composition bias toward basic and acidic residues. The span at 705 to 715 (DYSTSGFSPSA) shows a compositional bias: polar residues.

The protein belongs to the DEAD box helicase family. DDX4/VASA subfamily.

The protein localises to the cytoplasm. The catalysed reaction is ATP + H2O = ADP + phosphate + H(+). Its function is as follows. Probable ATP-dependent RNA helicase required during spermatogenesis to repress transposable elements and preventing their mobilization, which is essential for the germline integrity. Acts via the piRNA metabolic process, which mediates the repression of transposable elements during meiosis by forming complexes composed of piRNAs and Piwi proteins and governs the methylation and subsequent repression of transposons. Involved in the secondary piRNAs metabolic process, the production of piRNAs in fetal male germ cells through a ping-pong amplification cycle. This is Probable ATP-dependent RNA helicase DDX4 from Pelophylax lessonae (Pool frog).